A 276-amino-acid chain; its full sequence is Cytoskeleton protein RodZ (276 aa).

Residues 1 to 110 (MTSMRKKTIG…SSKKKKKKTS (110 aa)) are Cytoplasmic-facing. The helical; Signal-anchor for type II membrane protein transmembrane segment at 111 to 131 (FLPLFYFILFALSILIFVTYY) threads the bilayer. The Extracellular portion of the chain corresponds to 132 to 276 (VWNYIQTQPE…GQITVTFTKN (145 aa)).

The protein belongs to the RodZ family. In terms of assembly, interacts with MltG and MreC in the elongasome. Interacts with KhpB (also called EloR/Jag).

Its subcellular location is the cell membrane. Functionally, cytoskeletal protein that is involved in cell-shape control through regulation of the length of the long axis. Probably part of the elongasome which synthesizes peripheral peptidoglycan. This Streptococcus pneumoniae (strain ATCC BAA-255 / R6) protein is Cytoskeleton protein RodZ.